A 368-amino-acid polypeptide reads, in one-letter code: Homoserine O-acetyltransferase (368 aa).

The AB hydrolase-1 domain occupies 43–354; that stretch reads NVVVVCHALT…DYGHDAFLVE (312 aa). Catalysis depends on Ser148, which acts as the Nucleophile. Residue Arg220 coordinates substrate. Catalysis depends on residues Asp314 and His348. Residue Asp349 participates in substrate binding.

The protein belongs to the AB hydrolase superfamily. MetX family. In terms of assembly, homodimer.

It is found in the cytoplasm. The catalysed reaction is L-homoserine + acetyl-CoA = O-acetyl-L-homoserine + CoA. The protein operates within amino-acid biosynthesis; L-methionine biosynthesis via de novo pathway; O-acetyl-L-homoserine from L-homoserine: step 1/1. Its function is as follows. Transfers an acetyl group from acetyl-CoA to L-homoserine, forming acetyl-L-homoserine. The sequence is that of Homoserine O-acetyltransferase from Sulfurimonas autotrophica (strain ATCC BAA-671 / DSM 16294 / JCM 11897 / OK10).